A 359-amino-acid chain; its full sequence is UPF0283 membrane protein RL2646 (359 aa).

The segment at 1–48 (MSKPPSDPPRRAPAAFIYEDEATERRDNGRQGGERRKPESFSEHIVVT) is disordered. Residues 23-42 (TERRDNGRQGGERRKPESFS) are compositionally biased toward basic and acidic residues. Transmembrane regions (helical) follow at residues 77 to 97 (FGKI…GLWT) and 111 to 131 (LGYA…ALVI).

The protein belongs to the UPF0283 family.

Its subcellular location is the cell inner membrane. The protein is UPF0283 membrane protein RL2646 of Rhizobium johnstonii (strain DSM 114642 / LMG 32736 / 3841) (Rhizobium leguminosarum bv. viciae).